Consider the following 244-residue polypeptide: 5-oxoprolinase subunit A (244 aa).

The protein belongs to the LamB/PxpA family. Forms a complex composed of PxpA, PxpB and PxpC.

The enzyme catalyses 5-oxo-L-proline + ATP + 2 H2O = L-glutamate + ADP + phosphate + H(+). Functionally, catalyzes the cleavage of 5-oxoproline to form L-glutamate coupled to the hydrolysis of ATP to ADP and inorganic phosphate. In Salmonella heidelberg (strain SL476), this protein is 5-oxoprolinase subunit A.